A 258-amino-acid chain; its full sequence is Regulatory protein RecX (258 aa).

This sequence belongs to the RecX family.

Its subcellular location is the cytoplasm. Its function is as follows. Modulates RecA activity. This Streptococcus equi subsp. equi (strain 4047) protein is Regulatory protein RecX.